The chain runs to 240 residues: Pyridoxine 5'-phosphate synthase (240 aa).

3-amino-2-oxopropyl phosphate is bound at residue N6. D8–H9 lines the 1-deoxy-D-xylulose 5-phosphate pocket. Residue R17 coordinates 3-amino-2-oxopropyl phosphate. Residue H42 is the Proton acceptor of the active site. 1-deoxy-D-xylulose 5-phosphate is bound by residues R44 and H49. E69 serves as the catalytic Proton acceptor. Residue T99 coordinates 1-deoxy-D-xylulose 5-phosphate. H190 functions as the Proton donor in the catalytic mechanism. 3-amino-2-oxopropyl phosphate-binding positions include G191 and G212–H213.

Belongs to the PNP synthase family. As to quaternary structure, homooctamer; tetramer of dimers.

It localises to the cytoplasm. It carries out the reaction 3-amino-2-oxopropyl phosphate + 1-deoxy-D-xylulose 5-phosphate = pyridoxine 5'-phosphate + phosphate + 2 H2O + H(+). It participates in cofactor biosynthesis; pyridoxine 5'-phosphate biosynthesis; pyridoxine 5'-phosphate from D-erythrose 4-phosphate: step 5/5. Functionally, catalyzes the complicated ring closure reaction between the two acyclic compounds 1-deoxy-D-xylulose-5-phosphate (DXP) and 3-amino-2-oxopropyl phosphate (1-amino-acetone-3-phosphate or AAP) to form pyridoxine 5'-phosphate (PNP) and inorganic phosphate. In Pseudomonas putida (strain ATCC 700007 / DSM 6899 / JCM 31910 / BCRC 17059 / LMG 24140 / F1), this protein is Pyridoxine 5'-phosphate synthase.